The sequence spans 519 residues: T-complex protein 11-like protein 2 (519 aa).

The interval 1 to 30 is disordered; the sequence is MPFNGEKQCVGEDQPSDSDSSRFSESMASL. S16 is modified (phosphoserine). Residues 17 to 29 are compositionally biased toward low complexity; the sequence is DSDSSRFSESMAS.

This sequence belongs to the TCP11 family. Interacts with FMNL2; this interaction promotes muscle-derived satellite cell (MDSC) migration and differentiation.

Its subcellular location is the cytoplasm. It localises to the cytoskeleton. Promotes the migration of muscle-derived satellite cells (MDSCs) during differentiation throught interaction with FMNL2 and therefore may participate in microfilament assembly. This chain is T-complex protein 11-like protein 2, found in Homo sapiens (Human).